A 438-amino-acid chain; its full sequence is Transmembrane protease serine 11F (438 aa).

The Cytoplasmic portion of the chain corresponds to 1-32 (MMYAPVEFSEAEFSRAEYQRKQQFWDSVRLAL). The helical; Signal-anchor for type II membrane protein transmembrane segment at 33–53 (FTLAIVAIIGIAIGIVTHFVV) threads the bilayer. Topologically, residues 54–438 (EDDKSFYYLA…RDWIASKTGM (385 aa)) are extracellular. The SEA domain maps to 57–175 (KSFYYLASFK…PSFRLTPIDS (119 aa)). Positions 206 to 437 (IVQGRETAME…YRDWIASKTG (232 aa)) constitute a Peptidase S1 domain. Residues cysteine 233 and cysteine 249 are joined by a disulfide bond. Active-site charge relay system residues include histidine 248 and aspartate 293. Cystine bridges form between cysteine 358–cysteine 374 and cysteine 385–cysteine 413. Serine 389 functions as the Charge relay system in the catalytic mechanism.

The protein belongs to the peptidase S1 family.

The protein resides in the membrane. Functionally, probable serine protease. The polypeptide is Transmembrane protease serine 11F (TMPRSS11F) (Homo sapiens (Human)).